Here is a 633-residue protein sequence, read N- to C-terminus: tRNA uridine 5-carboxymethylaminomethyl modification enzyme MnmG (633 aa).

Residues 13-18 (GGGHAG), Val125, and Ser180 each bind FAD. 273–287 (GPRYCPSIEDKITRF) is a binding site for NAD(+). Gln370 contacts FAD.

This sequence belongs to the MnmG family. As to quaternary structure, homodimer. Heterotetramer of two MnmE and two MnmG subunits. It depends on FAD as a cofactor.

The protein localises to the cytoplasm. In terms of biological role, NAD-binding protein involved in the addition of a carboxymethylaminomethyl (cmnm) group at the wobble position (U34) of certain tRNAs, forming tRNA-cmnm(5)s(2)U34. The polypeptide is tRNA uridine 5-carboxymethylaminomethyl modification enzyme MnmG (Alteromonas mediterranea (strain DSM 17117 / CIP 110805 / LMG 28347 / Deep ecotype)).